A 114-amino-acid chain; its full sequence is Early 4 ORF4 protein (114 aa).

A Nuclear localization signal motif is present at residues 66–75 (RAKRRDRRRR).

Belongs to the adenoviridae E4 ORF4 family. As to quaternary structure, interacts with host BAZ1A/ACF1, host PPP2R2A/PP2a-B55alpha subunit, and host PPP2R5E/PP2a-B'B56 subunit. May interact with host SRC. May be phosphorylated by host SRC kinase.

It localises to the host nucleus. It is found in the host cytoplasm. Its function is as follows. Plays a role in viral alternative pre-mRNA splicing. Activates dephosphorylation by protein phosphatase 2A of host SR proteins and converts their splicing properties. When expressed alone ex vivo, induces p53/TP53-independent apoptosis called cytoplasmic death. May mimic nutrient/growth signals to activate the host mTOR pathway. The polypeptide is Early 4 ORF4 protein (Homo sapiens (Human)).